The following is a 52-amino-acid chain: Insulin-2 (52 aa).

3 disulfide bridges follow: Cys-7/Cys-38, Cys-19/Cys-51, and Cys-37/Cys-42.

Belongs to the insulin family. Heterodimer of a B chain and an A chain linked by two disulfide bonds.

It is found in the secreted. Functionally, insulin decreases blood glucose concentration. It increases cell permeability to monosaccharides, amino acids and fatty acids. It accelerates glycolysis, the pentose phosphate cycle, and glycogen synthesis in liver. The polypeptide is Insulin-2 (Huso dauricus (Kaluga sturgeon)).